Reading from the N-terminus, the 765-residue chain is LPS-assembly protein LptD (765 aa).

The first 18 residues, 1–18, serve as a signal peptide directing secretion; the sequence is MQIRYFLALSLLPQVVLA.

This sequence belongs to the LptD family. In terms of assembly, component of the lipopolysaccharide transport and assembly complex. Interacts with LptE and LptA.

The protein localises to the cell outer membrane. Functionally, together with LptE, is involved in the assembly of lipopolysaccharide (LPS) at the surface of the outer membrane. This is LPS-assembly protein LptD from Shewanella sp. (strain ANA-3).